We begin with the raw amino-acid sequence, 345 residues long: Phosphate acyltransferase (345 aa).

This sequence belongs to the PlsX family. In terms of assembly, homodimer. Probably interacts with PlsY.

The protein resides in the cytoplasm. It carries out the reaction a fatty acyl-[ACP] + phosphate = an acyl phosphate + holo-[ACP]. Its pathway is lipid metabolism; phospholipid metabolism. In terms of biological role, catalyzes the reversible formation of acyl-phosphate (acyl-PO(4)) from acyl-[acyl-carrier-protein] (acyl-ACP). This enzyme utilizes acyl-ACP as fatty acyl donor, but not acyl-CoA. This chain is Phosphate acyltransferase, found in Trichlorobacter lovleyi (strain ATCC BAA-1151 / DSM 17278 / SZ) (Geobacter lovleyi).